The following is a 273-amino-acid chain: Phosphatidylglycerol--prolipoprotein diacylglyceryl transferase (273 aa).

3 helical membrane passes run 20 to 40, 59 to 79, and 97 to 117; these read LAVRWYALAYMVSFIIALPIA, FLFYAILGVLLGGRLGYVLFY, and GGMSFHGGALGVILALAYFSW. A 1,2-diacyl-sn-glycero-3-phospho-(1'-sn-glycerol) is bound at residue R142. 2 helical membrane-spanning segments follow: residues 206 to 226 and 243 to 263; these read FGFLSGLFLFGYACARSFCEF and MGQLLCIPMALAGMGLMVYAM.

The protein belongs to the Lgt family.

Its subcellular location is the cell inner membrane. The enzyme catalyses L-cysteinyl-[prolipoprotein] + a 1,2-diacyl-sn-glycero-3-phospho-(1'-sn-glycerol) = an S-1,2-diacyl-sn-glyceryl-L-cysteinyl-[prolipoprotein] + sn-glycerol 1-phosphate + H(+). The protein operates within protein modification; lipoprotein biosynthesis (diacylglyceryl transfer). Its function is as follows. Catalyzes the transfer of the diacylglyceryl group from phosphatidylglycerol to the sulfhydryl group of the N-terminal cysteine of a prolipoprotein, the first step in the formation of mature lipoproteins. The chain is Phosphatidylglycerol--prolipoprotein diacylglyceryl transferase from Gluconobacter oxydans (strain 621H) (Gluconobacter suboxydans).